The sequence spans 345 residues: N-malonyltransferase FDB2 (345 aa).

Residue Cys110 is the Acyl-thioester intermediate of the active site. The active-site Proton acceptor is His158. Residue Asp173 is part of the active site.

Belongs to the arylamine N-acetyltransferase family.

It functions in the pathway xenobiotic degradation. N-malonyltransferase; part of the Fusarium detoxification of benzoxazolinone cluster 2 (FDB2) involved in the degradation of benzoxazolinones produced by the host plant. Maize, wheat, and rye produce the 2 benzoxazinone phytoanticipins 2,4-dihy-droxy-7-methoxy-1,4-benzoxazin-3-one (DIMBOA) and 2,4-dihydroxy-1,4-benzoxazin-3-one (DIBOA) that, due to their inherent instability once released, spontaneously degrade to the more stable corresponding benzoxazolinones, 6-methoxy-2-benzoxazolinone (MBOA) and 2-benzoxazolinone (BOA), respectively. The first step in the detoxification of benzoxazolinones involves the hydrolysis of the cyclic ester bond of benzoxazolinones by the FDB1 cluster gamma-lactamase MBL1 to aminophenols. MBL1 is able to convert BOA into 2-aminophenol (2-AP), as well as MBOA into 5-methoxy-2-aminophenol (2-AMP). The FDB2 cluster N-malonyltransferase FDB2/NAT1 then metabolizes aminophenols via N-malonylation to non-toxic malonamic acids. FDB2/NAT1 converts 2-AP into N-(2-hydroxyphenyl) malonamic acid (HPMA) and 2-AMP into N-(2-hydroxy-4-methoxyphenyl) malonamic acid (HMPMA). The duplicated dienlactone hydrolases DLH1 and DLH2 may provide redundant function for hydrolyzing the lactone moiety in the BOA molecule. The roles of the amidases an other enzymes encoded by the 2 FDB clusters have not been identified so far. This Gibberella moniliformis (strain M3125 / FGSC 7600) (Maize ear and stalk rot fungus) protein is N-malonyltransferase FDB2.